The following is a 426-amino-acid chain: Glutamate-1-semialdehyde 2,1-aminomutase (426 aa).

Lys265 is subject to N6-(pyridoxal phosphate)lysine.

It belongs to the class-III pyridoxal-phosphate-dependent aminotransferase family. HemL subfamily. Homodimer. It depends on pyridoxal 5'-phosphate as a cofactor.

Its subcellular location is the cytoplasm. The enzyme catalyses (S)-4-amino-5-oxopentanoate = 5-aminolevulinate. It participates in porphyrin-containing compound metabolism; protoporphyrin-IX biosynthesis; 5-aminolevulinate from L-glutamyl-tRNA(Glu): step 2/2. This chain is Glutamate-1-semialdehyde 2,1-aminomutase, found in Neisseria gonorrhoeae (strain ATCC 700825 / FA 1090).